A 331-amino-acid chain; its full sequence is Flagellar P-ring protein (331 aa).

An N-terminal signal peptide occupies residues 1 to 25 (MKKRLAVLLVIVLTITFSFSVTTRI).

It belongs to the FlgI family. As to quaternary structure, the basal body constitutes a major portion of the flagellar organelle and consists of four rings (L,P,S, and M) mounted on a central rod.

Its subcellular location is the periplasm. The protein resides in the bacterial flagellum basal body. Functionally, assembles around the rod to form the L-ring and probably protects the motor/basal body from shearing forces during rotation. This is Flagellar P-ring protein from Thermotoga petrophila (strain ATCC BAA-488 / DSM 13995 / JCM 10881 / RKU-1).